A 307-amino-acid polypeptide reads, in one-letter code: Auxin-induced protein PCNT115 (307 aa).

Tyr-64 acts as the Proton donor in catalysis. His-136 contacts substrate. 215-225 (SPLGRGFLSSG) serves as a coordination point for NADP(+).

It belongs to the aldo/keto reductase family. Aldo/keto reductase 2 subfamily.

This chain is Auxin-induced protein PCNT115, found in Nicotiana tabacum (Common tobacco).